Here is a 139-residue protein sequence, read N- to C-terminus: uncharacterized protein (139 aa).

Residues 77–97 traverse the membrane as a helical segment; that stretch reads YCFFFFLVLFLNGIIATRGKA.

The protein localises to the mitochondrion membrane. This is an uncharacterized protein from Arabidopsis thaliana (Mouse-ear cress).